Here is a 65-residue protein sequence, read N- to C-terminus: Alpha-conotoxin BnIA (65 aa).

The signal sequence occupies residues methionine 1–serine 21. Residues phenylalanine 22–lysine 48 constitute a propeptide that is removed on maturation. 2 cysteine pairs are disulfide-bonded: cysteine 50/cysteine 56 and cysteine 51/cysteine 64. The segment at serine 52–proline 54 is ser-Xaa-Pro motif, crucial for potent interaction with nAChR. The residue at position 64 (cysteine 64) is a Cysteine amide.

Belongs to the conotoxin A superfamily. In terms of tissue distribution, expressed by the venom duct.

The protein localises to the secreted. Alpha-conotoxins act on postsynaptic membranes, they bind to the nicotinic acetylcholine receptors (nAChR) and thus inhibit them. This toxin inhibits acetylcholine-evoked currents reversibly in oocytes expressing the human alpha-7/CHRNA7 nAChR, and blocks nerve-evoked skeletal muscle contractions in isolated mouse neuromuscular preparations, but with a very low affinity. This chain is Alpha-conotoxin BnIA, found in Conus bandanus (Banded marble cone).